The primary structure comprises 273 residues: Aliphatic sulfonates import ATP-binding protein SsuB 2 (273 aa).

Residues Leu17–Ala241 form the ABC transporter domain. Position 50 to 57 (Gly50 to Ser57) interacts with ATP.

The protein belongs to the ABC transporter superfamily. Aliphatic sulfonates importer (TC 3.A.1.17.2) family. The complex is composed of two ATP-binding proteins (SsuB), two transmembrane proteins (SsuC) and a solute-binding protein (SsuA).

It localises to the cell inner membrane. It catalyses the reaction ATP + H2O + aliphatic sulfonate-[sulfonate-binding protein]Side 1 = ADP + phosphate + aliphatic sulfonateSide 2 + [sulfonate-binding protein]Side 1.. Part of the ABC transporter complex SsuABC involved in aliphatic sulfonates import. Responsible for energy coupling to the transport system. This is Aliphatic sulfonates import ATP-binding protein SsuB 2 from Burkholderia lata (strain ATCC 17760 / DSM 23089 / LMG 22485 / NCIMB 9086 / R18194 / 383).